Reading from the N-terminus, the 236-residue chain is Uridylate kinase (236 aa).

9 to 12 is a binding site for ATP; the sequence is KFSG. The interval 17–22 is involved in allosteric activation by GTP; that stretch reads GNSGFG. Glycine 51 serves as a coordination point for UMP. 2 residues coordinate ATP: glycine 52 and arginine 56. Residues aspartate 72 and 133–140 contribute to the UMP site; that span reads TGNPFFTT. Residues threonine 160, tyrosine 166, and aspartate 169 each contribute to the ATP site.

Belongs to the UMP kinase family. In terms of assembly, homohexamer.

The protein resides in the cytoplasm. The enzyme catalyses UMP + ATP = UDP + ADP. The protein operates within pyrimidine metabolism; CTP biosynthesis via de novo pathway; UDP from UMP (UMPK route): step 1/1. Allosterically activated by GTP. Inhibited by UTP. Functionally, catalyzes the reversible phosphorylation of UMP to UDP. This Helicobacter hepaticus (strain ATCC 51449 / 3B1) protein is Uridylate kinase.